The chain runs to 198 residues: C4b-binding protein beta chain (198 aa).

The N-terminal stretch at 1 to 17 is a signal peptide; that stretch reads MFFWLMCYLVDVWLISA. One can recognise a Sushi 1; atypical; lacks a Cys domain in the interval 22–77; sequence HCPDPLLVTDEFSSLEPVNVNDTFMFKCNEHCIFKGSNWSQCRENHTRVTHSPVSK. N-linked (GlcNAc...) asparagine glycosylation is found at N42, N59, and N66. Residues 79–135 form the Sushi 2 domain; it reads RDCGPPETPTHGYFEGRDFKSGSTITYYCEARYRLVGTQHQQCIDGEWTSAPPICEL. Intrachain disulfides connect C81–C121 and C107–C133.

In terms of assembly, disulfide-linked complex of alpha and beta chains.

The protein resides in the secreted. Controls the classical pathway of complement activation. It binds as a cofactor to C3b/C4b inactivator (C3bINA), which then hydrolyzes the complement fragment C4b. It also accelerates the degradation of the C4bC2a complex (C3 convertase) by dissociating the complement fragment C2a. It also interacts with serum amyloid P component. The sequence is that of C4b-binding protein beta chain (C4BPB) from Bos taurus (Bovine).